Consider the following 158-residue polypeptide: Large ribosomal subunit protein uL15 (158 aa).

It belongs to the universal ribosomal protein uL15 family. As to quaternary structure, part of the 50S ribosomal subunit.

Its function is as follows. Binds to the 23S rRNA. This is Large ribosomal subunit protein uL15 from Aeropyrum pernix (strain ATCC 700893 / DSM 11879 / JCM 9820 / NBRC 100138 / K1).